The chain runs to 144 residues: Large ribosomal subunit protein uL11 (144 aa).

Belongs to the universal ribosomal protein uL11 family. Part of the ribosomal stalk of the 50S ribosomal subunit. Interacts with L10 and the large rRNA to form the base of the stalk. L10 forms an elongated spine to which L12 dimers bind in a sequential fashion forming a multimeric L10(L12)X complex. In terms of processing, one or more lysine residues are methylated.

In terms of biological role, forms part of the ribosomal stalk which helps the ribosome interact with GTP-bound translation factors. The polypeptide is Large ribosomal subunit protein uL11 (Corynebacterium efficiens (strain DSM 44549 / YS-314 / AJ 12310 / JCM 11189 / NBRC 100395)).